Reading from the N-terminus, the 572-residue chain is uncharacterized protein (572 aa).

Positions 553 to 572 are disordered; the sequence is PSPAPKPVTVRKKKGNSPIS. Residues 561–572 show a composition bias toward basic residues; sequence TVRKKKGNSPIS.

This is an uncharacterized protein from Homo sapiens (Human).